Reading from the N-terminus, the 213-residue chain is Ribosomal RNA small subunit methyltransferase G (213 aa).

S-adenosyl-L-methionine-binding positions include Gly72, Phe77, 125-126, and Arg141; that span reads IE.

This sequence belongs to the methyltransferase superfamily. RNA methyltransferase RsmG family.

It is found in the cytoplasm. It carries out the reaction guanosine(527) in 16S rRNA + S-adenosyl-L-methionine = N(7)-methylguanosine(527) in 16S rRNA + S-adenosyl-L-homocysteine. In terms of biological role, specifically methylates the N7 position of guanine in position 527 of 16S rRNA. This is Ribosomal RNA small subunit methyltransferase G from Sinorhizobium medicae (strain WSM419) (Ensifer medicae).